Reading from the N-terminus, the 290-residue chain is MTQTRLHFTTGKIEAERIFAALELAFEDEGLPIAVLEVDEDQDIHEVSLYADGDVDTVEARVKDILAGLALSKPVEREVLPDIDWVARSLEGLKPVRAGRFFVHGAHDRRKRHSGELAIEIEAGLAFGTGHHGTTSGCLEMLEKVVRREHPRNALDLGTGSAVLAIAVAKLAHIPVLATDIDPVAVKVAAANARLNHVKALIETVTAPGFHHPIFGRRAPFDLIVANILARPLMRLAPQMAGHIALGGSIVLSGILERQRDAVISAYVGQNFRHVRTLYREGWVTIHLKH.

Residues Thr135, Gly158, Asp180, and Asn227 each contribute to the S-adenosyl-L-methionine site.

The protein belongs to the methyltransferase superfamily. PrmA family.

The protein resides in the cytoplasm. It carries out the reaction L-lysyl-[protein] + 3 S-adenosyl-L-methionine = N(6),N(6),N(6)-trimethyl-L-lysyl-[protein] + 3 S-adenosyl-L-homocysteine + 3 H(+). Methylates ribosomal protein L11. The polypeptide is Ribosomal protein L11 methyltransferase (Mesorhizobium japonicum (strain LMG 29417 / CECT 9101 / MAFF 303099) (Mesorhizobium loti (strain MAFF 303099))).